Here is a 202-residue protein sequence, read N- to C-terminus: Adapter protein MecA 2 (202 aa).

The protein belongs to the MecA family. In terms of assembly, homodimer.

Its function is as follows. Enables the recognition and targeting of unfolded and aggregated proteins to the ClpC protease or to other proteins involved in proteolysis. Acts negatively in the development of competence by binding ComK and recruiting it to the ClpCP protease. When overexpressed, inhibits sporulation. Also involved in Spx degradation by ClpC. The protein is Adapter protein MecA 2 (mecA2) of Bacillus cereus (strain ATCC 14579 / DSM 31 / CCUG 7414 / JCM 2152 / NBRC 15305 / NCIMB 9373 / NCTC 2599 / NRRL B-3711).